We begin with the raw amino-acid sequence, 956 residues long: Glycine dehydrogenase (decarboxylating) 2 (956 aa).

Lys706 carries the N6-(pyridoxal phosphate)lysine modification.

This sequence belongs to the GcvP family. In terms of assembly, the glycine cleavage system is composed of four proteins: P, T, L and H. Pyridoxal 5'-phosphate serves as cofactor.

The catalysed reaction is N(6)-[(R)-lipoyl]-L-lysyl-[glycine-cleavage complex H protein] + glycine + H(+) = N(6)-[(R)-S(8)-aminomethyldihydrolipoyl]-L-lysyl-[glycine-cleavage complex H protein] + CO2. The glycine cleavage system catalyzes the degradation of glycine. The P protein binds the alpha-amino group of glycine through its pyridoxal phosphate cofactor; CO(2) is released and the remaining methylamine moiety is then transferred to the lipoamide cofactor of the H protein. The protein is Glycine dehydrogenase (decarboxylating) 2 of Colwellia psychrerythraea (strain 34H / ATCC BAA-681) (Vibrio psychroerythus).